We begin with the raw amino-acid sequence, 384 residues long: Substance-K receptor (384 aa).

The Extracellular portion of the chain corresponds to methionine 1 to glutamine 32. Asparagine 11, asparagine 18, and asparagine 19 each carry an N-linked (GlcNAc...) asparagine glycan. Residues leucine 33 to tryptophan 56 traverse the membrane as a helical segment. The Cytoplasmic segment spans residues isoleucine 57–asparagine 69. A helical transmembrane segment spans residues tyrosine 70–asparagine 90. Topologically, residues phenylalanine 91–histidine 107 are extracellular. The cysteines at positions 106 and 181 are disulfide-linked. A helical transmembrane segment spans residues phenylalanine 108–alanine 129. Over aspartate 130 to arginine 149 the chain is Cytoplasmic. A helical membrane pass occupies residues alanine 150 to serine 170. Residues threonine 171–leucine 196 are Extracellular-facing. A helical transmembrane segment spans residues tyrosine 197–serine 218. Topologically, residues valine 219–threonine 251 are cytoplasmic. A helical membrane pass occupies residues methionine 252–leucine 272. The Extracellular segment spans residues glycine 273–leucine 290. A helical transmembrane segment spans residues alanine 291–leucine 310. Residues asparagine 311–proline 384 are Cytoplasmic-facing. Residue cysteine 324 is the site of S-palmitoyl cysteine attachment.

The protein belongs to the G-protein coupled receptor 1 family.

The protein localises to the cell membrane. Its function is as follows. This is a receptor for the tachykinin neuropeptide substance K (neurokinin A). It is associated with G proteins that activate a phosphatidylinositol-calcium second messenger system. This Canis lupus familiaris (Dog) protein is Substance-K receptor (TACR2).